A 255-amino-acid chain; its full sequence is tRNA pseudouridine synthase A (255 aa).

D53 (nucleophile) is an active-site residue. Y113 lines the substrate pocket.

The protein belongs to the tRNA pseudouridine synthase TruA family. In terms of assembly, homodimer.

The enzyme catalyses uridine(38/39/40) in tRNA = pseudouridine(38/39/40) in tRNA. Its function is as follows. Formation of pseudouridine at positions 38, 39 and 40 in the anticodon stem and loop of transfer RNAs. The sequence is that of tRNA pseudouridine synthase A from Acidiphilium cryptum (strain JF-5).